The sequence spans 703 residues: MARDLLLEVGAEEIPASFIGPALDDLKRVITERMADARLKHGEVRTFGTPRRLAVWVKDVADAGEDIIKEVLGPSAKAAFDAQGKPTKAAEKFAESLKLAVDQLGRATTAKGEYLSARVEEKGRPAADILKDTLHAAVHGINFRKSMRWGDVDTSFARPVQWLVALLGSDVLPVVFGDVTSGRTTRGHRFLSPDAIELKAPAEYEVALEKAHVVADITKRRAQLVEKVRAAASKAGAQLLEDESLVDQVTNLVELPSPVVGTFEERHLDLPPEVLVQEMKSHQRYFSLVDSAGKLQPKFIAVSNTPVRDEQLSLRGYQRVLRARLADGRFFFDEDRKTPLIDRVEKLGRVVWQGQLGSYLEKVERFRTLAVWLGQEAGRAGEAATIERAATLAKADLVTGMVGEFPELQGIMGREYARAGGEPDAVALAIAEHYLPRGAEDALPTQDPGALIGIADRLDSLCGIFAIGKAPTGAADPFALRRACIAIIRLVLGRGYRFSLSAAVDESLRLLAPKIANAKRKAGEPAPREQVLEFFRGRLKALWGEQHRTDVVEAVLSAGFDDLVAAQKRLEALSHIVGRADFQPLAVAFKRVVNIVEKQGRDVQGGETNPQKLVDEPERNLHTAFTQARSTVSGLVRVDDFSGALREITGLKPAVDTFFDKVMVMAEDKALRENRIRLLVEIGALFNQVADFSKIQAETAAAA.

Belongs to the class-II aminoacyl-tRNA synthetase family. Tetramer of two alpha and two beta subunits.

The protein resides in the cytoplasm. It catalyses the reaction tRNA(Gly) + glycine + ATP = glycyl-tRNA(Gly) + AMP + diphosphate. This Myxococcus xanthus (strain DK1622) protein is Glycine--tRNA ligase beta subunit.